We begin with the raw amino-acid sequence, 170 residues long: NADH-quinone oxidoreductase subunit B (170 aa).

[4Fe-4S] cluster contacts are provided by cysteine 46, cysteine 47, cysteine 111, and cysteine 141.

The protein belongs to the complex I 20 kDa subunit family. In terms of assembly, NDH-1 is composed of 14 different subunits. Subunits NuoB, C, D, E, F, and G constitute the peripheral sector of the complex. Requires [4Fe-4S] cluster as cofactor.

The protein localises to the cell membrane. The enzyme catalyses a quinone + NADH + 5 H(+)(in) = a quinol + NAD(+) + 4 H(+)(out). In terms of biological role, NDH-1 shuttles electrons from NADH, via FMN and iron-sulfur (Fe-S) centers, to quinones in the respiratory chain. The immediate electron acceptor for the enzyme in this species is believed to be a menaquinone. Couples the redox reaction to proton translocation (for every two electrons transferred, four hydrogen ions are translocated across the cytoplasmic membrane), and thus conserves the redox energy in a proton gradient. In Geobacillus sp. (strain WCH70), this protein is NADH-quinone oxidoreductase subunit B.